The following is a 659-amino-acid chain: A-type ATP synthase subunit I (659 aa).

Helical transmembrane passes span 376–396 (FFFG…VISA), 415–435 (IMLW…SYCG), 460–480 (VMAL…GFIV), 489–509 (AAIL…LFAL), 513–533 (LGIP…LFVV), 542–562 (MAVL…LSYA), 566–586 (ALAL…NMVW), and 590–610 (IGPI…GHIF).

It belongs to the V-ATPase 116 kDa subunit family. In terms of assembly, has multiple subunits with at least A(3), B(3), C, D, E, F, H, I and proteolipid K(x).

It is found in the cell membrane. Its function is as follows. Component of the A-type ATP synthase that produces ATP from ADP in the presence of a proton gradient across the membrane. The polypeptide is A-type ATP synthase subunit I (Pyrococcus abyssi (strain GE5 / Orsay)).